The chain runs to 132 residues: uncharacterized protein (132 aa).

It to M.jannaschii MJ0661.

This is an uncharacterized protein from Helicobacter pylori (strain J99 / ATCC 700824) (Campylobacter pylori J99).